The following is a 284-amino-acid chain: Tryptophan 2,3-dioxygenase (284 aa).

Substrate-binding positions include 51-55, Tyr113, and Arg117; that span reads FIIQH. His240 contacts heme. Thr254 is a binding site for substrate.

Belongs to the tryptophan 2,3-dioxygenase family. Homotetramer. It depends on heme as a cofactor.

The enzyme catalyses L-tryptophan + O2 = N-formyl-L-kynurenine. It functions in the pathway amino-acid degradation; L-tryptophan degradation via kynurenine pathway; L-kynurenine from L-tryptophan: step 1/2. Functionally, heme-dependent dioxygenase that catalyzes the oxidative cleavage of the L-tryptophan (L-Trp) pyrrole ring and converts L-tryptophan to N-formyl-L-kynurenine. Catalyzes the oxidative cleavage of the indole moiety. The polypeptide is Tryptophan 2,3-dioxygenase (Rhodococcus jostii (strain RHA1)).